We begin with the raw amino-acid sequence, 387 residues long: Protein WHAT'S THIS FACTOR 9, mitochondrial (387 aa).

The transit peptide at 1 to 24 (MLSIRRHAKTVASSCTNLTQKRTY) directs the protein to the mitochondrion. The PORR domain maps to 32 to 358 (KRDPYFDNIE…KKYIQLMKNS (327 aa)).

Its subcellular location is the mitochondrion. Functionally, RNA-binding protein involved in group II intron splicing. Binds specific group II introns and promotes their splicing (e.g. rpl2 and ccmFC). In Arabidopsis thaliana (Mouse-ear cress), this protein is Protein WHAT'S THIS FACTOR 9, mitochondrial.